The following is a 137-amino-acid chain: Large ribosomal subunit protein uL16 (137 aa).

The protein belongs to the universal ribosomal protein uL16 family. In terms of assembly, part of the 50S ribosomal subunit.

Binds 23S rRNA and is also seen to make contacts with the A and possibly P site tRNAs. In Rhodopseudomonas palustris (strain BisB18), this protein is Large ribosomal subunit protein uL16.